The following is a 220-amino-acid chain: Aklanonic acid methyltransferase DauC (220 aa).

The protein belongs to the methyltransferase superfamily. DnrC family. As to quaternary structure, homodimer.

The catalysed reaction is aklanonate + S-adenosyl-L-methionine = methyl aklanonate + S-adenosyl-L-homocysteine. Its pathway is antibiotic biosynthesis; daunorubicin biosynthesis. It functions in the pathway antibiotic biosynthesis; carminomycin biosynthesis. The protein operates within antibiotic biosynthesis; rhodomycin biosynthesis. It participates in antibiotic biosynthesis; aclacinomycin biosynthesis. Involved in the biosynthesis of aklavinone which is an important precursor common to the formation of the clinically significant anthracyclines such as carminomycin, daunorubicin (daunomycin), rhodomycin, aclacinomycin T (aklavin) and aclacinomycin A (aclarubicin). These compounds are aromatic polyketide antibiotics that exhibit high cytotoxicity and are widely applied in the chemotherapy of a variety of cancers. Catalyzes the methyl esterification of aklanonic acid to yield aklanonic acid methyl ester. The sequence is that of Aklanonic acid methyltransferase DauC (dauC) from Streptomyces sp. (strain C5).